We begin with the raw amino-acid sequence, 740 residues long: Phosphoribosylformylglycinamidine synthase subunit PurL (740 aa).

His53 is a catalytic residue. Positions 56 and 95 each coordinate ATP. Mg(2+) is bound at residue Glu97. Substrate contacts are provided by residues 98 to 101 (SHNH) and Arg120. His99 (proton acceptor) is an active-site residue. Asp121 contributes to the Mg(2+) binding site. A substrate-binding site is contributed by Gln244. Asp272 provides a ligand contact to Mg(2+). 316-318 (ESQ) contacts substrate. ATP contacts are provided by Asp497 and Gly534. Mg(2+) is bound at residue Asn535. Ser537 provides a ligand contact to substrate.

The protein belongs to the FGAMS family. In terms of assembly, monomer. Part of the FGAM synthase complex composed of 1 PurL, 1 PurQ and 2 PurS subunits.

Its subcellular location is the cytoplasm. The enzyme catalyses N(2)-formyl-N(1)-(5-phospho-beta-D-ribosyl)glycinamide + L-glutamine + ATP + H2O = 2-formamido-N(1)-(5-O-phospho-beta-D-ribosyl)acetamidine + L-glutamate + ADP + phosphate + H(+). The protein operates within purine metabolism; IMP biosynthesis via de novo pathway; 5-amino-1-(5-phospho-D-ribosyl)imidazole from N(2)-formyl-N(1)-(5-phospho-D-ribosyl)glycinamide: step 1/2. Its function is as follows. Part of the phosphoribosylformylglycinamidine synthase complex involved in the purines biosynthetic pathway. Catalyzes the ATP-dependent conversion of formylglycinamide ribonucleotide (FGAR) and glutamine to yield formylglycinamidine ribonucleotide (FGAM) and glutamate. The FGAM synthase complex is composed of three subunits. PurQ produces an ammonia molecule by converting glutamine to glutamate. PurL transfers the ammonia molecule to FGAR to form FGAM in an ATP-dependent manner. PurS interacts with PurQ and PurL and is thought to assist in the transfer of the ammonia molecule from PurQ to PurL. In Rhodospirillum rubrum (strain ATCC 11170 / ATH 1.1.1 / DSM 467 / LMG 4362 / NCIMB 8255 / S1), this protein is Phosphoribosylformylglycinamidine synthase subunit PurL.